The following is a 236-amino-acid chain: Small ribosomal subunit protein uS3 (236 aa).

One can recognise a KH type-2 domain in the interval 39–107; that stretch reads VRHFLMQKLS…PTQLNIAEVR (69 aa).

This sequence belongs to the universal ribosomal protein uS3 family. Part of the 30S ribosomal subunit. Forms a tight complex with proteins S10 and S14.

In terms of biological role, binds the lower part of the 30S subunit head. Binds mRNA in the 70S ribosome, positioning it for translation. This chain is Small ribosomal subunit protein uS3, found in Blochmanniella pennsylvanica (strain BPEN).